The sequence spans 76 residues: Conotoxin Am6.3 (76 aa).

A signal peptide spans 1-22 (MKLTCMMIIAVLFLTAWTFATA). Cystine bridges form between C52-C67, C59-C71, and C66-C75.

Belongs to the conotoxin O1 superfamily. Post-translationally, is not hydroxylated. Expressed by the venom duct.

It is found in the secreted. Functionally, probable toxin that inhibits ion channels. This chain is Conotoxin Am6.3, found in Conus amadis (Amadis cone).